Here is a 187-residue protein sequence, read N- to C-terminus: MIAAAASMSALGLGLGYLLGAAARKFHVETPPIVEEIAKILPGTNCGACGFPGCNGLAEAMAEGNAPVTACTPGGRDVALALAEIVTVEAGADAGPIAEIEPMVAFVFEDHCTGCQKCFKRCPTDAIVGGAKQIHTVVMDACIGCDACIEVCPTEAIVSRVKPKTLKTWYWDKPQPGLVAASAETAA.

The tract at residues 1-23 is hydrophobic; the sequence is MIAAAASMSALGLGLGYLLGAAA. Residues 29–88 form the 4Fe-4S domain; that stretch reads ETPPIVEEIAKILPGTNCGACGFPGCNGLAEAMAEGNAPVTACTPGGRDVALALAEIVTV. 12 residues coordinate [4Fe-4S] cluster: Cys-46, Cys-49, Cys-54, Cys-71, Cys-112, Cys-115, Cys-118, Cys-122, Cys-142, Cys-145, Cys-148, and Cys-152. 2 4Fe-4S ferredoxin-type domains span residues 103–132 and 133–162; these read MVAF…GGAK and QIHT…SRVK.

It belongs to the 4Fe4S bacterial-type ferredoxin family. RnfB subfamily. As to quaternary structure, the complex is composed of six subunits: RnfA, RnfB, RnfC, RnfD, RnfE and RnfG. It depends on [4Fe-4S] cluster as a cofactor.

The protein localises to the cellular chromatophore membrane. Part of a membrane-bound complex that couples electron transfer with translocation of ions across the membrane. Required for nitrogen fixation. Involved in electron transfer to nitrogenase. In Rhodobacter capsulatus (Rhodopseudomonas capsulata), this protein is Ion-translocating oxidoreductase complex subunit B.